The chain runs to 217 residues: MKVAPSLLSADFMHLAKEIESVSNADFLHVDVMDGHYVPNLTMGPVVLENVTQMSQVPLDVHLMVENASFFAELFAPLKPQIISIHAENEKHPHRVLQLIKNLGITPGIVLNPHTHEESIKYLLESVGLVLLMSVNPGFGGQKFLDLVLEKCLKVKELIKRYNPSCLLEVDGGVNDKNIFELQQAGVDVVVSGSYIFKSKDRKLAIEGLQNVRQSLA.

Serine 6 contacts substrate. 3 residues coordinate a divalent metal cation: histidine 29, aspartate 31, and histidine 62. The active-site Proton acceptor is aspartate 31. Residues histidine 62, 138–141, 171–173, and 193–194 contribute to the substrate site; these read GFGG, DGG, and GS. Aspartate 171 contributes to the a divalent metal cation binding site. Residue aspartate 171 is the Proton donor of the active site.

This sequence belongs to the ribulose-phosphate 3-epimerase family. Requires a divalent metal cation as cofactor.

It carries out the reaction D-ribulose 5-phosphate = D-xylulose 5-phosphate. Its pathway is carbohydrate degradation. Functionally, catalyzes the reversible epimerization of D-ribulose 5-phosphate to D-xylulose 5-phosphate. This is Ribulose-phosphate 3-epimerase from Helicobacter pylori (strain ATCC 700392 / 26695) (Campylobacter pylori).